Consider the following 485-residue polypeptide: NADH-quinone oxidoreductase subunit N (485 aa).

The next 14 membrane-spanning stretches (helical) occupy residues 8–28, 35–55, 71–91, 105–125, 127–147, 159–179, 203–223, 235–255, 271–291, 297–317, 326–346, 373–393, 408–430, and 455–475; these read LIAL…MLSI, FLNA…LWFV, GFAM…CTFA, FYLL…ANHL, ALFL…GYAF, YTIL…LVYA, LLAG…LVPF, PAPV…GVVM, VVLG…ALSQ, LLGY…IALQ, VGVY…VVSL, AAVM…LGFI, WWLV…RVAV, and IVVL…QPLI.

It belongs to the complex I subunit 2 family. As to quaternary structure, NDH-1 is composed of 13 different subunits. Subunits NuoA, H, J, K, L, M, N constitute the membrane sector of the complex.

Its subcellular location is the cell inner membrane. It catalyses the reaction a quinone + NADH + 5 H(+)(in) = a quinol + NAD(+) + 4 H(+)(out). NDH-1 shuttles electrons from NADH, via FMN and iron-sulfur (Fe-S) centers, to quinones in the respiratory chain. The immediate electron acceptor for the enzyme in this species is believed to be ubiquinone. Couples the redox reaction to proton translocation (for every two electrons transferred, four hydrogen ions are translocated across the cytoplasmic membrane), and thus conserves the redox energy in a proton gradient. This chain is NADH-quinone oxidoreductase subunit N, found in Salmonella arizonae (strain ATCC BAA-731 / CDC346-86 / RSK2980).